Consider the following 690-residue polypeptide: Guanylate cyclase soluble subunit alpha-1 (690 aa).

Position 267 is a phosphoserine (serine 267). The Guanylate cyclase domain occupies 481–608 (TMLFSDIVGF…NNVTLANKFE (128 aa)).

This sequence belongs to the adenylyl cyclase class-4/guanylyl cyclase family. In terms of assembly, the active enzyme is formed by a heterodimer of an alpha and a beta subunit. Heterodimer with GUCY1B1. Requires Mg(2+) as cofactor. Mn(2+) is required as a cofactor.

The protein localises to the cytoplasm. It catalyses the reaction GTP = 3',5'-cyclic GMP + diphosphate. Its activity is regulated as follows. Activated by nitric oxide in the presence of magnesium or manganese ions. The polypeptide is Guanylate cyclase soluble subunit alpha-1 (GUCY1A1) (Canis lupus familiaris (Dog)).